The sequence spans 133 residues: uncharacterized protein (133 aa).

This sequence belongs to the ycf68 family.

It is found in the plastid. The protein resides in the chloroplast. This is an uncharacterized protein from Oryza sativa subsp. japonica (Rice).